The chain runs to 448 residues: B box and SPRY domain-containing protein (448 aa).

A compositionally biased stretch (low complexity) spans 1 to 18; that stretch reads MSSDVSGTESGSESGPES. The segment at 1 to 58 is disordered; it reads MSSDVSGTESGSESGPESVPEPVPEPGPEPESEPGPGPAPGPGPGPAPGPGPGLGREP. Positions 19 to 51 are enriched in pro residues; sequence VPEPVPEPGPEPESEPGPGPAPGPGPGPAPGPG. Residues 63–111 form a B box-type zinc finger; that stretch reads QPCQLCPEHGKPLSWFCLSERRPVCATCAGFGGRCHRHRIRRAEEHAEE. The region spanning 257–448 is the B30.2/SPRY domain; that stretch reads SPLLTQLWAT…VADQVISIVC (192 aa).

Interacts with TRPV5 and TRPV6. Interacts with YWHAZ/14-3-3 protein zeta. Predominantly expressed in testis. Expressed in brain at low levels.

The protein localises to the cytoplasm. It localises to the membrane. In terms of biological role, may regulate epithelial calcium transport by inhibiting TRPV5 activity. The protein is B box and SPRY domain-containing protein (Bspry) of Rattus norvegicus (Rat).